The sequence spans 87 residues: Cell division topological specificity factor (87 aa).

Belongs to the MinE family.

Prevents the cell division inhibition by proteins MinC and MinD at internal division sites while permitting inhibition at polar sites. This ensures cell division at the proper site by restricting the formation of a division septum at the midpoint of the long axis of the cell. The sequence is that of Cell division topological specificity factor from Roseiflexus sp. (strain RS-1).